An 874-amino-acid polypeptide reads, in one-letter code: DNA mismatch repair protein MutS (874 aa).

Residue 630-637 (GPNMAGKS) participates in ATP binding.

Belongs to the DNA mismatch repair MutS family.

Its function is as follows. This protein is involved in the repair of mismatches in DNA. It is possible that it carries out the mismatch recognition step. This protein has a weak ATPase activity. This Chlorobium phaeovibrioides (strain DSM 265 / 1930) (Prosthecochloris vibrioformis (strain DSM 265)) protein is DNA mismatch repair protein MutS.